The sequence spans 291 residues: Insulin-like growth factor-binding protein 3 (291 aa).

An N-terminal signal peptide occupies residues 1–27 (MLRARPALWAAALTALTLLRGPPAARA). The tract at residues 28-134 (GAGTMGAGPV…LRPYLLPSAS (107 aa)) is IGF-binding. Residues 36-119 (PVVRCEPCDA…LDGRGLCANA (84 aa)) form the IGFBP N-terminal domain. 6 disulfide bridges follow: C40–C69, C43–C71, C51–C72, C60–C75, C83–C96, and C90–C116. N-linked (GlcNAc...) asparagine glycosylation is found at N118 and N136. Disordered regions lie at residues 132–162 (SASG…RVPV) and 177–211 (KGHA…TEYG). The span at 146-155 (MGSTENQAGP) shows a compositional bias: polar residues. At S148 the chain carries Phosphoserine. Residues 177–190 (KGHAKDSQRYKVDY) are compositionally biased toward basic and acidic residues. Over residues 191–202 (ESQSTDTQNFSS) the composition is skewed to polar residues. The N-linked (GlcNAc...) asparagine glycan is linked to N199. S201 bears the Phosphoserine mark. Residues 210 to 285 (YGPCRREMED…DVKGKGDVHC (76 aa)) enclose the Thyroglobulin type-1 domain. 3 cysteine pairs are disulfide-bonded: C213-C240, C251-C262, and C264-C285.

As to quaternary structure, interacts with XLKD1. Binds IGF2 more than IGF1. Forms a ternary complex of about 140 to 150 kDa with IGF1 or IGF2 and a 85 kDa glycoprotein (ALS). Interacts with humanin; humanin competes with importin KPNB1 for binding to IGFBP3, blocking IGFBP3 nuclear import and IGFBP3-mediated apoptosis. Interacts with TMEM219. Interacts with RXRA; this interaction modulates the transcriptional activity of RXRA. Interacts with LRP1; this interaction mediates cell growth inhibition independent of IGF1. In terms of processing, phosphorylated by FAM20C in the extracellular medium. Phosphorylated by CK2; resulting in decreased nuclear localization. Plasma; expressed by most tissues.

Its subcellular location is the secreted. The protein localises to the nucleus. Its function is as follows. Multifunctional protein that plays a critical role in regulating the availability of IGFs such as IGF1 and IGF2 to their receptors and thereby regulates IGF-mediated cellular processes including proliferation, differentiation, and apoptosis in a cell-type specific manner. Also exhibits IGF-independent antiproliferative and apoptotic effects mediated by its receptor TMEM219/IGFBP-3R. Inhibits the positive effect of humanin on insulin sensitivity. Promotes testicular germ cell apoptosis. Acts via LRP-1/alpha2M receptor, also known as TGF-beta type V receptor, to mediate cell growth inhibition independent of IGF1. Mechanistically, induces serine-specific dephosphorylation of IRS1 or IRS2 upon ligation to its receptor, leading to the inhibitory cascade. In the nucleus, interacts with transcription factors such as retinoid X receptor-alpha/RXRA to regulate transcriptional signaling and apoptosis. This Bos taurus (Bovine) protein is Insulin-like growth factor-binding protein 3 (IGFBP3).